Here is a 235-residue protein sequence, read N- to C-terminus: Ribosomal RNA small subunit methyltransferase G (235 aa).

Residues Gly-74, Leu-79, 124-125 (AE), and Arg-142 each bind S-adenosyl-L-methionine. Positions 211 to 235 (RRRAAKPGRNKSGRTARSRGRTGRR) are disordered. Residues 213-235 (RAAKPGRNKSGRTARSRGRTGRR) show a composition bias toward basic residues.

It belongs to the methyltransferase superfamily. RNA methyltransferase RsmG family.

The protein localises to the cytoplasm. Specifically methylates the N7 position of guanine in position 518 of 16S rRNA. The polypeptide is Ribosomal RNA small subunit methyltransferase G (Mycolicibacterium smegmatis (strain ATCC 700084 / mc(2)155) (Mycobacterium smegmatis)).